We begin with the raw amino-acid sequence, 503 residues long: Cytosol aminopeptidase (503 aa).

The Mn(2+) site is built by K269 and D274. Residue K281 is part of the active site. D292, D351, and E353 together coordinate Mn(2+). Residue R355 is part of the active site.

This sequence belongs to the peptidase M17 family. Mn(2+) serves as cofactor.

It localises to the cytoplasm. It carries out the reaction Release of an N-terminal amino acid, Xaa-|-Yaa-, in which Xaa is preferably Leu, but may be other amino acids including Pro although not Arg or Lys, and Yaa may be Pro. Amino acid amides and methyl esters are also readily hydrolyzed, but rates on arylamides are exceedingly low.. The catalysed reaction is Release of an N-terminal amino acid, preferentially leucine, but not glutamic or aspartic acids.. Its function is as follows. Presumably involved in the processing and regular turnover of intracellular proteins. Catalyzes the removal of unsubstituted N-terminal amino acids from various peptides. This chain is Cytosol aminopeptidase, found in Vibrio cholerae serotype O1 (strain ATCC 39541 / Classical Ogawa 395 / O395).